The sequence spans 620 residues: Chaperone protein HscA homolog (620 aa).

The protein belongs to the heat shock protein 70 family.

Its function is as follows. Chaperone involved in the maturation of iron-sulfur cluster-containing proteins. Has a low intrinsic ATPase activity which is markedly stimulated by HscB. The polypeptide is Chaperone protein HscA homolog (Pseudomonas syringae pv. syringae (strain B728a)).